Reading from the N-terminus, the 394-residue chain is 4-hydroxybenzoate 3-monooxygenase (NAD(P)H) (394 aa).

Residues glutamate 32, threonine 42 to valine 47, and glutamine 102 contribute to the FAD site. Substrate-binding positions include tyrosine 203, serine 214–arginine 216, and tyrosine 224. FAD is bound at residue aspartate 288. Proline 295 is a substrate binding site. Leucine 301–asparagine 302 lines the FAD pocket.

The protein belongs to the aromatic-ring hydroxylase family. It depends on FAD as a cofactor.

The enzyme catalyses 4-hydroxybenzoate + NADH + O2 + H(+) = 3,4-dihydroxybenzoate + NAD(+) + H2O. It catalyses the reaction 4-hydroxybenzoate + NADPH + O2 + H(+) = 3,4-dihydroxybenzoate + NADP(+) + H2O. Its function is as follows. Involved in the degradation of 4-hydroxybenzoate (4HB) via the protocatechuate (PCA) 2,3-cleavage pathway. Catalyzes the conversion of 4HB into 2-hydroxypenta-2,4-dienoate (HPD). It is highly specific for 4-hydroxybenzoate, and is able to utilize both NADH and NADPH as electron donors at approximately equal rates. This is 4-hydroxybenzoate 3-monooxygenase (NAD(P)H) (praI) from Paenibacillus sp.